The primary structure comprises 232 residues: Endonuclease V (232 aa).

2 residues coordinate Mg(2+): Asp-43 and Asp-109.

Belongs to the endonuclease V family. The cofactor is Mg(2+).

It localises to the cytoplasm. The catalysed reaction is Endonucleolytic cleavage at apurinic or apyrimidinic sites to products with a 5'-phosphate.. DNA repair enzyme involved in the repair of deaminated bases. Selectively cleaves double-stranded DNA at the second phosphodiester bond 3' to a deoxyinosine leaving behind the intact lesion on the nicked DNA. This Thermofilum pendens (strain DSM 2475 / Hrk 5) protein is Endonuclease V.